A 259-amino-acid chain; its full sequence is UPF0246 protein MADE_1015435 (259 aa).

This sequence belongs to the UPF0246 family.

The protein is UPF0246 protein MADE_1015435 of Alteromonas mediterranea (strain DSM 17117 / CIP 110805 / LMG 28347 / Deep ecotype).